The sequence spans 68 residues: U-poneritoxin(01)-Om4a (68 aa).

Positions 1 to 25 are cleaved as a signal peptide; that stretch reads MKPSSLTLAFLVVFMMAIMYNSVQA. A propeptide spanning residues 26–39 is cleaved from the precursor; sequence EALADADAEAFAEA.

This sequence belongs to the formicidae venom precursor-01 superfamily. In terms of assembly, homo- or heterodimer with PLP7 (AC A0A348G6I9); disulfide-linked. Truncated sequences of this peptide have also been found in the venom. It is possible they have been cleaved in the venom. As to expression, expressed by the venom gland.

It localises to the secreted. Its function is as follows. This homodimer composed of two cationic amphipathic alpha-helical peptides has antimicrobial activities against E.coli (MIC=3.1 uM), S.aureus (MIC=3.1 uM), and S.cerevisiae (MIC=3.1 uM). It also shows histamine-releasing activity (66.4% at 10 uM) and a weak hemolytic activity (10.5% at 50 uM). In Odontomachus monticola (Trap-jaw ant), this protein is U-poneritoxin(01)-Om4a.